Here is a 330-residue protein sequence, read N- to C-terminus: Holliday junction branch migration complex subunit RuvB (330 aa).

A large ATPase domain (RuvB-L) region spans residues 1-181 (MEDRLVGCRL…FGVINKLELY (181 aa)). ATP contacts are provided by residues Leu-20, Arg-21, Gly-62, Lys-65, Thr-66, Thr-67, 128–130 (EDY), Arg-171, Tyr-181, and Arg-218. A Mg(2+)-binding site is contributed by Thr-66. The tract at residues 182–252 (SVEELGQIVK…IARTGLEALE (71 aa)) is small ATPAse domain (RuvB-S). Residues 255–330 (EIGLDAVDRN…AYEHFGLKYE (76 aa)) form a head domain (RuvB-H) region. DNA-binding residues include Lys-310 and Arg-315.

It belongs to the RuvB family. As to quaternary structure, homohexamer. Forms an RuvA(8)-RuvB(12)-Holliday junction (HJ) complex. HJ DNA is sandwiched between 2 RuvA tetramers; dsDNA enters through RuvA and exits via RuvB. An RuvB hexamer assembles on each DNA strand where it exits the tetramer. Each RuvB hexamer is contacted by two RuvA subunits (via domain III) on 2 adjacent RuvB subunits; this complex drives branch migration. In the full resolvosome a probable DNA-RuvA(4)-RuvB(12)-RuvC(2) complex forms which resolves the HJ.

It localises to the cytoplasm. It catalyses the reaction ATP + H2O = ADP + phosphate + H(+). Its function is as follows. The RuvA-RuvB-RuvC complex processes Holliday junction (HJ) DNA during genetic recombination and DNA repair, while the RuvA-RuvB complex plays an important role in the rescue of blocked DNA replication forks via replication fork reversal (RFR). RuvA specifically binds to HJ cruciform DNA, conferring on it an open structure. The RuvB hexamer acts as an ATP-dependent pump, pulling dsDNA into and through the RuvAB complex. RuvB forms 2 homohexamers on either side of HJ DNA bound by 1 or 2 RuvA tetramers; 4 subunits per hexamer contact DNA at a time. Coordinated motions by a converter formed by DNA-disengaged RuvB subunits stimulates ATP hydrolysis and nucleotide exchange. Immobilization of the converter enables RuvB to convert the ATP-contained energy into a lever motion, pulling 2 nucleotides of DNA out of the RuvA tetramer per ATP hydrolyzed, thus driving DNA branch migration. The RuvB motors rotate together with the DNA substrate, which together with the progressing nucleotide cycle form the mechanistic basis for DNA recombination by continuous HJ branch migration. Branch migration allows RuvC to scan DNA until it finds its consensus sequence, where it cleaves and resolves cruciform DNA. The protein is Holliday junction branch migration complex subunit RuvB of Acetivibrio thermocellus (strain ATCC 27405 / DSM 1237 / JCM 9322 / NBRC 103400 / NCIMB 10682 / NRRL B-4536 / VPI 7372) (Clostridium thermocellum).